Here is a 129-residue protein sequence, read N- to C-terminus: MSNIPTELKYASSHEWIRKEEDGSYTVGITEHAQELLGDMVFVELPEVGDTVTAGEDCAVAESVKAASDIYAPISGEVIAVNEALEDSPELVNSSAYGEGWFFRVMPSDESEVDALLDAEGYQAVIDED.

The Lipoyl-binding domain maps to 24 to 106 (SYTVGITEHA…YGEGWFFRVM (83 aa)). At lysine 65 the chain carries N6-lipoyllysine.

Belongs to the GcvH family. The glycine cleavage system is composed of four proteins: P, T, L and H. Requires (R)-lipoate as cofactor.

The glycine cleavage system catalyzes the degradation of glycine. The H protein shuttles the methylamine group of glycine from the P protein to the T protein. The sequence is that of Glycine cleavage system H protein from Shewanella baltica (strain OS185).